The sequence spans 261 residues: Undecaprenyl-diphosphatase (261 aa).

The next 7 membrane-spanning stretches (helical) occupy residues 38 to 58 (RSDF…TFVF), 75 to 95 (RDYV…GLAV), 106 to 126 (IQPI…AESV), 136 to 156 (VTWS…VFPG), 181 to 201 (FSFL…CFEL), 217 to 237 (VAFV…LGYI), and 241 to 261 (SFAP…TWLT).

The protein belongs to the UppP family.

Its subcellular location is the cell inner membrane. The enzyme catalyses di-trans,octa-cis-undecaprenyl diphosphate + H2O = di-trans,octa-cis-undecaprenyl phosphate + phosphate + H(+). In terms of biological role, catalyzes the dephosphorylation of undecaprenyl diphosphate (UPP). Confers resistance to bacitracin. This chain is Undecaprenyl-diphosphatase, found in Xylella fastidiosa (strain 9a5c).